A 312-amino-acid polypeptide reads, in one-letter code: Ribosomal RNA small subunit methyltransferase H (312 aa).

Residues 34–36 (GGH), Asp-54, Phe-81, Asp-102, and Gln-109 contribute to the S-adenosyl-L-methionine site.

The protein belongs to the methyltransferase superfamily. RsmH family.

It is found in the cytoplasm. It catalyses the reaction cytidine(1402) in 16S rRNA + S-adenosyl-L-methionine = N(4)-methylcytidine(1402) in 16S rRNA + S-adenosyl-L-homocysteine + H(+). Its function is as follows. Specifically methylates the N4 position of cytidine in position 1402 (C1402) of 16S rRNA. The sequence is that of Ribosomal RNA small subunit methyltransferase H from Geotalea uraniireducens (strain Rf4) (Geobacter uraniireducens).